The chain runs to 345 residues: Beta-hexosaminidase (345 aa).

Substrate-binding positions include D60, R68, R132, and 162 to 163; that span reads KH. H175 acts as the Proton donor/acceptor in catalysis. The active-site Nucleophile is the D247.

It belongs to the glycosyl hydrolase 3 family. NagZ subfamily.

The protein resides in the cytoplasm. The enzyme catalyses Hydrolysis of terminal non-reducing N-acetyl-D-hexosamine residues in N-acetyl-beta-D-hexosaminides.. It participates in cell wall biogenesis; peptidoglycan recycling. Plays a role in peptidoglycan recycling by cleaving the terminal beta-1,4-linked N-acetylglucosamine (GlcNAc) from peptide-linked peptidoglycan fragments, giving rise to free GlcNAc, anhydro-N-acetylmuramic acid and anhydro-N-acetylmuramic acid-linked peptides. The polypeptide is Beta-hexosaminidase (Actinobacillus pleuropneumoniae serotype 5b (strain L20)).